Here is a 60-residue protein sequence, read N- to C-terminus: MADENKFEQAKGNVKETVGNVTDNKELENEGKEDKTSGKAKEFVENAKDKANEVIDKFKK.

The segment at 1-41 is disordered; that stretch reads MADENKFEQAKGNVKETVGNVTDNKELENEGKEDKTSGKAK. Positions 23–41 are enriched in basic and acidic residues; that stretch reads DNKELENEGKEDKTSGKAK.

It belongs to the UPF0337 (CsbD) family.

The polypeptide is UPF0337 protein SSP1134 (Staphylococcus saprophyticus subsp. saprophyticus (strain ATCC 15305 / DSM 20229 / NCIMB 8711 / NCTC 7292 / S-41)).